Reading from the N-terminus, the 304-residue chain is Acetylglutamate kinase (304 aa).

Substrate is bound by residues 69-70, Arg91, and Asn202; that span reads GG.

The protein belongs to the acetylglutamate kinase family. ArgB subfamily.

The protein localises to the cytoplasm. It carries out the reaction N-acetyl-L-glutamate + ATP = N-acetyl-L-glutamyl 5-phosphate + ADP. It participates in amino-acid biosynthesis; L-arginine biosynthesis; N(2)-acetyl-L-ornithine from L-glutamate: step 2/4. Functionally, catalyzes the ATP-dependent phosphorylation of N-acetyl-L-glutamate. The chain is Acetylglutamate kinase from Caulobacter sp. (strain K31).